Reading from the N-terminus, the 257-residue chain is Hydroxyacylglutathione hydrolase (257 aa).

Zn(2+)-binding residues include histidine 54, histidine 56, aspartate 58, histidine 59, histidine 113, aspartate 137, and histidine 175.

Belongs to the metallo-beta-lactamase superfamily. Glyoxalase II family. Monomer. The cofactor is Zn(2+).

The catalysed reaction is an S-(2-hydroxyacyl)glutathione + H2O = a 2-hydroxy carboxylate + glutathione + H(+). The protein operates within secondary metabolite metabolism; methylglyoxal degradation; (R)-lactate from methylglyoxal: step 2/2. Its function is as follows. Thiolesterase that catalyzes the hydrolysis of S-D-lactoyl-glutathione to form glutathione and D-lactic acid. The polypeptide is Hydroxyacylglutathione hydrolase (Trichormus variabilis (strain ATCC 29413 / PCC 7937) (Anabaena variabilis)).